Reading from the N-terminus, the 222-residue chain is Ribosomal RNA small subunit methyltransferase G (222 aa).

Residues glycine 73, leucine 78, 124–125, and arginine 137 each bind S-adenosyl-L-methionine; that span reads AE.

This sequence belongs to the methyltransferase superfamily. RNA methyltransferase RsmG family.

It is found in the cytoplasm. Functionally, specifically methylates the N7 position of guanine in position 518 of 16S rRNA. The polypeptide is Ribosomal RNA small subunit methyltransferase G (Acidothermus cellulolyticus (strain ATCC 43068 / DSM 8971 / 11B)).